The primary structure comprises 366 residues: UDP-N-acetylglucosamine 2-epimerase (366 aa).

H207 is a catalytic residue.

It belongs to the UDP-N-acetylglucosamine 2-epimerase family. Homodimer.

The protein resides in the cytoplasm. It catalyses the reaction UDP-N-acetyl-alpha-D-glucosamine = UDP-N-acetyl-alpha-D-mannosamine. In terms of biological role, catalyzes the reversible epimerization at C-2 of UDP-N-acetylglucosamine (UDP-GlcNAc) to produce UDP-N-acetylmannosamine (UDP-ManNAc), the activated donor of ManNAc residues. In Methanocaldococcus jannaschii (strain ATCC 43067 / DSM 2661 / JAL-1 / JCM 10045 / NBRC 100440) (Methanococcus jannaschii), this protein is UDP-N-acetylglucosamine 2-epimerase (wecB).